A 209-amino-acid chain; its full sequence is SelT-like protein (209 aa).

The signal sequence occupies residues 1–22 (MDKTQLILLGLPIFLLCSDLFN). C64 and C67 are joined by a disulfide.

It belongs to the SelWTH family. SELT subfamily.

This Arabidopsis thaliana (Mouse-ear cress) protein is SelT-like protein.